A 217-amino-acid polypeptide reads, in one-letter code: Large ribosomal subunit protein uL16 (217 aa).

The protein belongs to the universal ribosomal protein uL16 family. In terms of assembly, component of the small ribosomal subunit. Mature ribosomes consist of a small (40S) and a large (60S) subunit. The 40S subunit contains about 33 different proteins and 1 molecule of RNA (18S). The 60S subunit contains about 49 different proteins and 3 molecules of RNA (25S, 5.8S and 5S).

This is Large ribosomal subunit protein uL16 (rpl10) from Dictyostelium discoideum (Social amoeba).